Consider the following 883-residue polypeptide: Phosphoenolpyruvate carboxylase (883 aa).

Residues His-138 and Lys-546 contribute to the active site.

This sequence belongs to the PEPCase type 1 family. The cofactor is Mg(2+).

The enzyme catalyses oxaloacetate + phosphate = phosphoenolpyruvate + hydrogencarbonate. In terms of biological role, forms oxaloacetate, a four-carbon dicarboxylic acid source for the tricarboxylic acid cycle. In Salmonella choleraesuis (strain SC-B67), this protein is Phosphoenolpyruvate carboxylase.